The primary structure comprises 154 residues: Large ribosomal subunit protein uL23z (154 aa).

The protein belongs to the universal ribosomal protein uL23 family.

Its function is as follows. Binds to a specific region on the 26S rRNA. The chain is Large ribosomal subunit protein uL23z (RPL23AA) from Arabidopsis thaliana (Mouse-ear cress).